A 189-amino-acid chain; its full sequence is GTPase NRas (189 aa).

Residues 10–18 and 29–30 each bind GTP; these read GAGGVGKSA and VD. The Effector region signature appears at 32 to 40; the sequence is YDPTIEDSY. A glycan ((Microbial infection) O-linked (Glc) threonine; by P.sordellii toxin TcsL) is linked at threonine 35. 57–61 is a GTP binding site; that stretch reads DTAGQ. Serine 89 is subject to Phosphoserine. 116–119 is a GTP binding site; sequence NKCD. Residues 166–185 are hypervariable region; the sequence is YRMKKLNSSDDGTQGCMGLP. Lysine 170 is covalently cross-linked (Glycyl lysine isopeptide (Lys-Gly) (interchain with G-Cter in ubiquitin)). Cysteine 181 carries S-palmitoyl cysteine lipidation. Residue cysteine 186 is the site of S-farnesyl cysteine attachment. Positions 187-189 are cleaved as a propeptide — removed in mature form; that stretch reads VVM.

It belongs to the small GTPase superfamily. Ras family. In terms of assembly, interacts (active GTP-bound form preferentially) with RGS14. Interacts (active GTP-bound form) with RASSF7. Interacts (active GTP-bound form) with both SHOC2 and PP1c (all isoforms) to form a tertiary complex; SHOC2 and PP1c preferably bind M-Ras/MRAS, but they also bind K-Ras/KRAS, N-Ras/NRAS and H-Ras/HRAS. Post-translationally, palmitoylated by the ZDHHC9-GOLGA7 complex. Depalmitoylated by ABHD17A, ABHD17B and ABHD17C. A continuous cycle of de- and re-palmitoylation regulates rapid exchange between plasma membrane and Golgi. Acetylation at Lys-104 prevents interaction with guanine nucleotide exchange factors (GEFs). In terms of processing, fatty-acylated at Lys-169 and/or Lys-170. Post-translationally, ubiquitinated by the BCR(LZTR1) E3 ubiquitin ligase complex at Lys-170 in a non-degradative manner, leading to inhibit Ras signaling by decreasing Ras association with membranes. Phosphorylation at Ser-89 enhances NRAS association with its downstream effectors. In terms of processing, (Microbial infection) Glucosylated at Thr-35 by P.sordellii toxin TcsL.

It is found in the cell membrane. The protein resides in the golgi apparatus membrane. It catalyses the reaction GTP + H2O = GDP + phosphate + H(+). Alternates between an inactive form bound to GDP and an active form bound to GTP. Activated by a guanine nucleotide-exchange factor (GEF) and inactivated by a GTPase-activating protein (GAP). Ras proteins bind GDP/GTP and possess intrinsic GTPase activity. In Homo sapiens (Human), this protein is GTPase NRas (NRAS).